A 241-amino-acid chain; its full sequence is Sugar fermentation stimulation protein homolog (241 aa).

It belongs to the SfsA family.

The chain is Sugar fermentation stimulation protein homolog from Yersinia enterocolitica serotype O:8 / biotype 1B (strain NCTC 13174 / 8081).